Here is a 321-residue protein sequence, read N- to C-terminus: MTLSLANYLAADSAAEALRRDVRAGLTAAPKSLPPKWFYDAVGSDLFDQITRLPEYYPTRTEAQILRTRSAEIIAAAGADTLVELGSGTSEKTRMLLDAMRDAELLRRFIPFDVDAGVLRSAGAAIGAEYPGIEIDAVCGDFEEHLGKIPHVGRRLVVFLGSTIGNLTPAPRAEFLSTLADTLQPGDSLLLGTDLVKDTGRLVRAYDDAAGVTAAFNRNVLAVVNRELSADFDLDAFEHVAKWNSDEERIEMWLRARTAQHVRVAALDLEVDFAAGEEMLTEVSCKFRPENVVAELAEAGLRQTHWWTDPAGDFGLSLAVR.

Residue tyrosine 56 coordinates L-histidine. S-adenosyl-L-methionine-binding positions include glycine 86, lysine 92, aspartate 113, and 141–142 (DF). L-histidine-binding positions include asparagine 166, tyrosine 206, and 282–284 (EVS).

The protein belongs to the methyltransferase superfamily. EgtD family. In terms of assembly, monomer.

It carries out the reaction L-histidine + 3 S-adenosyl-L-methionine = hercynine + 3 S-adenosyl-L-homocysteine + 3 H(+). Its pathway is amino-acid biosynthesis; ergothioneine biosynthesis. Catalyzes the SAM-dependent triple methylation of the alpha-amino group of histidine to form hercynine, a step in the biosynthesis pathway of ergothioneine. Among all the proteinogenic amino acids, only L-histidine is a substrate. The polypeptide is Histidine N-alpha-methyltransferase (Mycolicibacterium smegmatis (strain ATCC 700084 / mc(2)155) (Mycobacterium smegmatis)).